Consider the following 210-residue polypeptide: Na(+)-translocating NADH-quinone reductase subunit D (210 aa).

The next 5 helical transmembrane spans lie at 42–62 (FVMT…VSLI), 72–92 (IIVQ…ILKA), 103–123 (VFVG…AFAM), 131–151 (FIDG…VGFF), and 178–198 (NGLM…IWAI).

This sequence belongs to the NqrDE/RnfAE family. Composed of six subunits; NqrA, NqrB, NqrC, NqrD, NqrE and NqrF.

It is found in the cell inner membrane. It carries out the reaction a ubiquinone + n Na(+)(in) + NADH + H(+) = a ubiquinol + n Na(+)(out) + NAD(+). In terms of biological role, NQR complex catalyzes the reduction of ubiquinone-1 to ubiquinol by two successive reactions, coupled with the transport of Na(+) ions from the cytoplasm to the periplasm. NqrA to NqrE are probably involved in the second step, the conversion of ubisemiquinone to ubiquinol. In Vibrio cholerae serotype O1 (strain M66-2), this protein is Na(+)-translocating NADH-quinone reductase subunit D.